A 299-amino-acid polypeptide reads, in one-letter code: Protease HtpX homolog (299 aa).

Transmembrane regions (helical) follow at residues 15–35 and 39–59; these read ILLL…GYLF and GLGG…SMIF. H143 is a binding site for Zn(2+). E144 is an active-site residue. Residue H147 coordinates Zn(2+). 2 helical membrane passes run 158–178 and 198–218; these read IAVA…RMMW and IIML…ATLV. E227 contacts Zn(2+).

This sequence belongs to the peptidase M48B family. The cofactor is Zn(2+).

Its subcellular location is the cell membrane. The sequence is that of Protease HtpX homolog from Streptococcus pneumoniae (strain Taiwan19F-14).